We begin with the raw amino-acid sequence, 152 residues long: Ribosome maturation factor RimP (152 aa).

It belongs to the RimP family.

It is found in the cytoplasm. Its function is as follows. Required for maturation of 30S ribosomal subunits. The polypeptide is Ribosome maturation factor RimP (Rubrobacter xylanophilus (strain DSM 9941 / JCM 11954 / NBRC 16129 / PRD-1)).